The chain runs to 122 residues: Large ribosomal subunit protein uL14 (122 aa).

Belongs to the universal ribosomal protein uL14 family. In terms of assembly, part of the 50S ribosomal subunit. Forms a cluster with proteins L3 and L19. In the 70S ribosome, L14 and L19 interact and together make contacts with the 16S rRNA in bridges B5 and B8.

Binds to 23S rRNA. Forms part of two intersubunit bridges in the 70S ribosome. The polypeptide is Large ribosomal subunit protein uL14 (Thiobacillus denitrificans (strain ATCC 25259 / T1)).